The primary structure comprises 290 residues: ATP synthase gamma chain (290 aa).

The protein belongs to the ATPase gamma chain family. In terms of assembly, F-type ATPases have 2 components, CF(1) - the catalytic core - and CF(0) - the membrane proton channel. CF(1) has five subunits: alpha(3), beta(3), gamma(1), delta(1), epsilon(1). CF(0) has three main subunits: a, b and c.

It is found in the cell inner membrane. Functionally, produces ATP from ADP in the presence of a proton gradient across the membrane. The gamma chain is believed to be important in regulating ATPase activity and the flow of protons through the CF(0) complex. This Buchnera aphidicola subsp. Acyrthosiphon pisum (strain APS) (Acyrthosiphon pisum symbiotic bacterium) protein is ATP synthase gamma chain.